The following is a 1117-amino-acid chain: Zinc finger E-box-binding homeobox 1 (1117 aa).

Disordered stretches follow at residues 1–103 (MADG…QNHD) and 122–143 (APEEDQRQGTPEASSHDENGTP). The segment covering 15–30 (PRRNNVTNYNTVVEAN) has biased composition (low complexity). Phosphoserine is present on residues serine 31 and serine 33. Residues 150-173 (LTCPYCDRGYKRFTSLKEHIKYRH) form a C2H2-type 1 zinc finger. Glycyl lysine isopeptide (Lys-Gly) (interchain with G-Cter in SUMO2) cross-links involve residues lysine 166 and lysine 175. 2 C2H2-type zinc fingers span residues 180 to 202 (FSCSLCSYTFAYRTQLERHMTSH) and 220 to 242 (FKCTECGKAFKYKHHLKEHLRIH). The C2H2-type 4; atypical zinc finger occupies 248 to 272 (YECPNCKKRFSHSGSYSSHISSKKC). The segment at 278–307 (VNGRPRSGLKTSQCSSPSLSTSPGSPTRPQ) is disordered. Residue lysine 287 forms a Glycyl lysine isopeptide (Lys-Gly) (interchain with G-Cter in SUMO2) linkage. The segment covering 288–304 (TSQCSSPSLSTSPGSPT) has biased composition (low complexity). Phosphoserine is present on residues serine 293 and serine 302. Residues lysine 311 and lysine 315 each participate in a glycyl lysine isopeptide (Lys-Gly) (interchain with G-Cter in SUMO2) cross-link. Lysine 327 is covalently cross-linked (Glycyl lysine isopeptide (Lys-Gly) (interchain with G-Cter in SUMO); alternate). Residue lysine 327 forms a Glycyl lysine isopeptide (Lys-Gly) (interchain with G-Cter in SUMO2); alternate linkage. Residues lysine 419, lysine 473, lysine 484, lysine 495, and lysine 528 each participate in a glycyl lysine isopeptide (Lys-Gly) (interchain with G-Cter in SUMO2) cross-link. Disordered stretches follow at residues 476 to 501 (IPAPTNSCKSEKLPEDLTVKSETDKS), 528 to 566 (KHYDPECPAQPPPPAPATEKPESSASSAGNGDLSPSQPP), and 613 to 687 (GQIP…SPLN). Residues 484 to 501 (KSEKLPEDLTVKSETDKS) are compositionally biased toward basic and acidic residues. Residues 559 to 618 (DLSPSQPPLKNLLSLLKAYYALNAQPSTEELSKIADSVNLPLDGVKKWFEKMQAGQIPGQ) constitute a DNA-binding region (homeobox; atypical). A phosphoserine mark is found at serine 657, serine 664, serine 671, and serine 678. Residues 673–687 (MNGSRSCTSSPSPLN) are compositionally biased toward polar residues. The residue at position 680 (threonine 680) is a Phosphothreonine. A Phosphoserine modification is found at serine 682. A Glycyl lysine isopeptide (Lys-Gly) (interchain with G-Cter in SUMO); alternate cross-link involves residue lysine 752. A Glycyl lysine isopeptide (Lys-Gly) (interchain with G-Cter in SUMO2); alternate cross-link involves residue lysine 752. The disordered stretch occupies residues 834-876 (PPVKVIQPNGNQDERQDTSSEGVSTVEDQNDSDSTPPKKKTRK). Over residues 852 to 868 (SSEGVSTVEDQNDSDST) the composition is skewed to polar residues. 2 consecutive C2H2-type zinc fingers follow at residues 882–904 (YACDLCDKIFQKSSSLLRHKYEH) and 910–932 (HECGICRKAFKHKHHLIEHMRLH). The C2H2-type 7; atypical zinc-finger motif lies at 938–959 (YQCDKCGKRFSHSGSYSQHMNH). The interval 991-1117 (EHVGARASPS…QLSEEKTNEA (127 aa)) is disordered. Acidic residues-rich tracts occupy residues 1013–1032 (EEDEDSEKEEEEEDKEMEEL), 1042–1069 (QGEEEEEEEEEEEEEEEEEEEVEADEAE), and 1098–1109 (SEMESESESEQL).

The protein belongs to the delta-EF1/ZFH-1 C2H2-type zinc-finger family. In terms of assembly, interacts (via N-terminus) with SMARCA4/BRG1. In terms of processing, ubiquitinated, leading to degradation in a proteasome-dependent manner. Deubiquitinated by USP51, leading to stabilization. In terms of tissue distribution, expressed in the external germinal layer (EGL) and internal granular layer (IGL) of the cerebellum (at protein level).

Its subcellular location is the nucleus. Acts as a transcriptional repressor. Binds to E-box sequences in the immunoglobulin heavy chain enhancer as well as in the regulatory regions of many other tissue-specific genes. Represses E-cadherin promoter and induces an epithelial-mesenchymal transition (EMT) by recruiting SMARCA4/BRG1. Represses BCL6 transcription in the presence of the corepressor CTBP1. Positively regulates neuronal differentiation. Represses RCOR1 transcription activation during neurogenesis. Represses transcription by binding to the E box (5'-CANNTG-3'). In the absence of TGFB1, acts as a repressor of COL1A2 transcription via binding to the E-box in the upstream enhancer region. Promotes tumorigenicity by repressing stemness-inhibiting microRNAs. This is Zinc finger E-box-binding homeobox 1 from Mus musculus (Mouse).